The sequence spans 198 residues: MTERSLNNLILASSSKRRIALLKQINIEPGLILPADIDEAPLKKELPKDYSIRMAKSKAEKIQSLNPNYFVLGVDTVVACGRRILLKAENVEQAEKCIRLLSGRRHRVYTSVCLLTPDQSKQHIRTVVTIVKFKRLSEQEIKYYLASEEWKNRAGGCNIQGLAGVFVLFLRGSYSSVIGLPLHETYCLLSNYFNFNLY.

The active-site Proton acceptor is D75.

Belongs to the Maf family. YhdE subfamily. It depends on a divalent metal cation as a cofactor.

The protein localises to the cytoplasm. It catalyses the reaction dTTP + H2O = dTMP + diphosphate + H(+). The catalysed reaction is UTP + H2O = UMP + diphosphate + H(+). Its function is as follows. Nucleoside triphosphate pyrophosphatase that hydrolyzes dTTP and UTP. May have a dual role in cell division arrest and in preventing the incorporation of modified nucleotides into cellular nucleic acids. This chain is dTTP/UTP pyrophosphatase, found in Wolbachia pipientis wMel.